Consider the following 156-residue polypeptide: Small ribosomal subunit protein uS7 (156 aa).

Belongs to the universal ribosomal protein uS7 family. Part of the 30S ribosomal subunit. Contacts proteins S9 and S11.

Functionally, one of the primary rRNA binding proteins, it binds directly to 16S rRNA where it nucleates assembly of the head domain of the 30S subunit. Is located at the subunit interface close to the decoding center, probably blocks exit of the E-site tRNA. The sequence is that of Small ribosomal subunit protein uS7 from Tolumonas auensis (strain DSM 9187 / NBRC 110442 / TA 4).